Consider the following 606-residue polypeptide: Melanoma-associated antigen D2 (606 aa).

The tract at residues 1–204 is disordered; it reads MSDTSESGAG…QASGTTGGRR (204 aa). Position 2 is an N-acetylserine (Ser-2). Ser-5 is subject to Phosphoserine. A compositionally biased stretch (polar residues) spans 24 to 37; that stretch reads SSMMQTLLTVTQNV. A Phosphothreonine modification is found at Thr-72. The segment covering 81–93 has biased composition (polar residues); sequence TQASSTTQLTDTQ. Residues 122-131 show a composition bias toward basic and acidic residues; that stretch reads ETKKVSHVAD. A compositionally biased stretch (low complexity) spans 142–164; it reads EAAPSQAPADEPEPESAAAQSQE. Position 157 is a phosphoserine (Ser-157). Residues 171-181 show a composition bias toward basic residues; it reads KVKAKKARKVK. Residues Ser-190, Ser-191, Ser-194, Ser-197, Ser-244, and Ser-247 each carry the phosphoserine modification. The segment covering 248–260 has biased composition (basic residues); the sequence is PKARRGKARRRAA. The segment at 248–275 is disordered; it reads PKARRGKARRRAAKLQSSQEPEAPPPRD. Residues Ser-264 and Ser-265 each carry the phosphoserine modification. The MAGE domain maps to 279–478; it reads LQGRANDLVK…KEWAAQYREA (200 aa). The tract at residues 534-563 is disordered; the sequence is GAEAKAKAQESGSASTGASTSTNNSASASA.

In terms of assembly, interacts with GNAS. May interact with DNAJB1. Widely expressed. In the developing and adult kidney, expressed in the thick ascending limb of the loop of Henle and the distal convoluted tubules outside the loop.

Regulates the expression, localization to the plasma membrane and function of the sodium chloride cotransporters SLC12A1 and SLC12A3, two key components of salt reabsorption in the distal renal tubule. The polypeptide is Melanoma-associated antigen D2 (MAGED2) (Homo sapiens (Human)).